Consider the following 508-residue polypeptide: Photosystem II CP47 reaction center protein (508 aa).

The next 6 membrane-spanning stretches (helical) occupy residues S21–S36, I101–W115, G140–F156, I203–S218, V237–V252, and S457–R472.

The protein belongs to the PsbB/PsbC family. PsbB subfamily. In terms of assembly, PSII is composed of 1 copy each of membrane proteins PsbA, PsbB, PsbC, PsbD, PsbE, PsbF, PsbH, PsbI, PsbJ, PsbK, PsbL, PsbM, PsbT, PsbX, PsbY, PsbZ, Psb30/Ycf12, at least 3 peripheral proteins of the oxygen-evolving complex and a large number of cofactors. It forms dimeric complexes. The cofactor is Binds multiple chlorophylls. PSII binds additional chlorophylls, carotenoids and specific lipids..

It is found in the plastid. The protein localises to the chloroplast thylakoid membrane. Its function is as follows. One of the components of the core complex of photosystem II (PSII). It binds chlorophyll and helps catalyze the primary light-induced photochemical processes of PSII. PSII is a light-driven water:plastoquinone oxidoreductase, using light energy to abstract electrons from H(2)O, generating O(2) and a proton gradient subsequently used for ATP formation. This chain is Photosystem II CP47 reaction center protein, found in Aethionema cordifolium (Lebanon stonecress).